Here is a 62-residue protein sequence, read N- to C-terminus: Large ribosomal subunit protein uL29 (62 aa).

It belongs to the universal ribosomal protein uL29 family.

The polypeptide is Large ribosomal subunit protein uL29 (Geobacter sp. (strain M21)).